A 388-amino-acid polypeptide reads, in one-letter code: Beta-1,4-galactosyltransferase 5 (388 aa).

Residues 1–14 (MRARRGLLRLPRRS) lie on the Cytoplasmic side of the membrane. Residues 15-35 (LLAALFFFSLSSSLLYFVYVA) traverse the membrane as a helical; Signal-anchor for type II membrane protein segment. The Lumenal segment spans residues 36 to 388 (PGIVNTYLFM…TPELAQVTEY (353 aa)). N-linked (GlcNAc...) asparagine glycans are attached at residues Asn77, Asn81, Asn90, and Asn128. Cys114 and Cys158 are disulfide-bonded. UDP-alpha-D-galactose is bound by residues 169–173 (PFRNR), 208–210 (FNR), 235–236 (VD), Tyr264, and Trp296. Cys229 and Cys248 are joined by a disulfide. Asp236 contacts Mn(2+). 298–301 (GEDD) provides a ligand contact to N-acetyl-D-glucosamine. His329 is a Mn(2+) binding site. UDP-alpha-D-galactose is bound at residue 329–330 (HH). Arg340 contacts N-acetyl-D-glucosamine. Residues Asn360, Asn364, and Asn373 are each glycosylated (N-linked (GlcNAc...) asparagine).

This sequence belongs to the glycosyltransferase 7 family. The cofactor is Mn(2+). Highest levels in heart, brain, liver and kidney with lower levels in spleen, lung and testis.

It localises to the golgi apparatus. The protein resides in the golgi stack membrane. It carries out the reaction a beta-D-glucosyl-(1&lt;-&gt;1')-N-acylsphing-4-enine + UDP-alpha-D-galactose = a beta-D-Gal-(1-&gt;4)-beta-D-Glc-(1&lt;-&gt;1)-Cer(d18:1(4E)) + UDP + H(+). The protein operates within protein modification; protein glycosylation. It participates in sphingolipid metabolism. Functionally, catalyzes the synthesis of lactosylceramide (LacCer) via the transfer of galactose from UDP-galactose to glucosylceramide (GlcCer). LacCer is the starting point in the biosynthesis of all gangliosides (membrane-bound glycosphingolipids) which play pivotal roles in the CNS including neuronal maturation and axonal and myelin formation. Plays a role in the glycosylation of BMPR1A and regulation of its protein stability. Essential for extraembryonic development during early embryogenesis. The polypeptide is Beta-1,4-galactosyltransferase 5 (Mus musculus (Mouse)).